A 238-amino-acid polypeptide reads, in one-letter code: Cysteine-rich venom protein pseudechetoxin (238 aa).

Residues 1 to 19 (MIAFIVLLSLAAVLQQSSG) form the signal peptide. Positions 20 to 27 (TADFASES) are excised as a propeptide. Residues 38 to 164 (VDKHNALRRS…SSKYLYVCQY (127 aa)) form the SCP domain. The Zn(2+) site is built by threonine 51 and serine 106. Cystine bridges form between cysteine 75/cysteine 153, cysteine 92/cysteine 165, cysteine 148/cysteine 162, cysteine 184/cysteine 191, cysteine 187/cysteine 196, cysteine 200/cysteine 233, cysteine 209/cysteine 227, and cysteine 218/cysteine 231. In terms of domain architecture, ShKT spans 200 to 233 (CKRNNDFSNCKSLAKKSKCQTEWIKKKCPASCFC).

Expressed by the venom gland.

Its subcellular location is the secreted. Its function is as follows. Blocks olfactory (CNGA2) and retinal (CNGA1) cyclic nucleotide-gated (CNG) ion channel currents. Does not inhibit retinal (CNGA3) currents. It forms high-affinity contacts with the pore turret region and most likely inhibits CNG channel current by blocking the external entrance to the transmembrane pore. Is really more potent that Pseudecin. Does not affect neither depolarization- nor caffeine-induced contraction arterial smooth muscle. The protein is Cysteine-rich venom protein pseudechetoxin of Pseudechis australis (Mulga snake).